The sequence spans 165 residues: Alanine- and arginine-rich domain-containing protein (165 aa).

The tract at residues 136-165 (QQLKKRQDQERASKPQSPQDEEMNPECGNA) is disordered.

The protein is Alanine- and arginine-rich domain-containing protein (Aard) of Rattus norvegicus (Rat).